A 1318-amino-acid polypeptide reads, in one-letter code: DNA-directed RNA polymerase subunit beta' (1318 aa).

Zn(2+)-binding residues include Cys60, Cys62, Cys75, and Cys78. Residues Asp535, Asp537, and Asp539 each coordinate Mg(2+). Residues Cys890, Cys967, Cys974, and Cys977 each contribute to the Zn(2+) site.

This sequence belongs to the RNA polymerase beta' chain family. In terms of assembly, the RNAP catalytic core consists of 2 alpha, 1 beta, 1 beta' and 1 omega subunit. When a sigma factor is associated with the core the holoenzyme is formed, which can initiate transcription. It depends on Mg(2+) as a cofactor. Zn(2+) is required as a cofactor.

It carries out the reaction RNA(n) + a ribonucleoside 5'-triphosphate = RNA(n+1) + diphosphate. In terms of biological role, DNA-dependent RNA polymerase catalyzes the transcription of DNA into RNA using the four ribonucleoside triphosphates as substrates. This is DNA-directed RNA polymerase subunit beta' from Rhodococcus jostii (strain RHA1).